Here is a 367-residue protein sequence, read N- to C-terminus: Glutamate 5-kinase (367 aa).

K17 is an ATP binding site. Substrate is bound by residues S57, D144, and N156. Residues 176 to 177 (SD) and 217 to 223 (TGGMTSK) each bind ATP. Residues 279–357 (AGALTLDEGA…SELPGELRRP (79 aa)) form the PUA domain.

The protein belongs to the glutamate 5-kinase family.

It localises to the cytoplasm. It carries out the reaction L-glutamate + ATP = L-glutamyl 5-phosphate + ADP. The protein operates within amino-acid biosynthesis; L-proline biosynthesis; L-glutamate 5-semialdehyde from L-glutamate: step 1/2. Functionally, catalyzes the transfer of a phosphate group to glutamate to form L-glutamate 5-phosphate. The chain is Glutamate 5-kinase from Mycolicibacterium paratuberculosis (strain ATCC BAA-968 / K-10) (Mycobacterium paratuberculosis).